The primary structure comprises 117 residues: UPF0342 protein GWCH70_0629 (117 aa).

This sequence belongs to the UPF0342 family.

The protein is UPF0342 protein GWCH70_0629 of Geobacillus sp. (strain WCH70).